The chain runs to 586 residues: Membrane protein insertase YidC (586 aa).

The next 5 membrane-spanning stretches (helical) occupy residues 5–25 (TLIG…LMAP), 371–391 (GVII…LTMA), 436–456 (LGGC…FYVF), 486–506 (IPLY…AVFF), and 522–542 (FMMY…PSGL).

Belongs to the OXA1/ALB3/YidC family. Type 1 subfamily. As to quaternary structure, interacts with the Sec translocase complex via SecD. Specifically interacts with transmembrane segments of nascent integral membrane proteins during membrane integration.

It is found in the cell inner membrane. Functionally, required for the insertion and/or proper folding and/or complex formation of integral membrane proteins into the membrane. Involved in integration of membrane proteins that insert both dependently and independently of the Sec translocase complex, as well as at least some lipoproteins. Aids folding of multispanning membrane proteins. The sequence is that of Membrane protein insertase YidC from Chloroherpeton thalassium (strain ATCC 35110 / GB-78).